The following is a 300-amino-acid chain: FeMo cofactor biosynthesis protein NifB (300 aa).

The Radical SAM core domain maps to 24 to 266 (HDKVGRVHLP…PQFRACGQCR (243 aa)). Residues C38, C42, and C45 each contribute to the [4Fe-4S] cluster site. The S-adenosyl-L-methionine site is built by G93, T144, and I196. Residues C262 and C265 each contribute to the [4Fe-4S] cluster site.

Belongs to the radical SAM superfamily. NifB family. Monomer. [4Fe-4S] cluster is required as a cofactor.

The protein operates within cofactor biosynthesis; Fe-Mo cofactor biosynthesis. Functionally, involved in the biosynthesis of the iron-molybdenum cofactor (FeMo-co or M-cluster) found in the dinitrogenase enzyme of the nitrogenase complex in nitrogen-fixing microorganisms. NifB catalyzes the crucial step of radical SAM-dependent carbide insertion that occurs concomitant with the insertion of a 9th sulfur and the rearrangement/coupling of two [4Fe-4S] clusters into a [8Fe-9S-C] cluster, the precursor to the M-cluster. The polypeptide is FeMo cofactor biosynthesis protein NifB (Methanocaldococcus jannaschii (strain ATCC 43067 / DSM 2661 / JAL-1 / JCM 10045 / NBRC 100440) (Methanococcus jannaschii)).